The following is a 92-amino-acid chain: Small ribosomal subunit protein uS19 (92 aa).

The protein belongs to the universal ribosomal protein uS19 family.

Functionally, protein S19 forms a complex with S13 that binds strongly to the 16S ribosomal RNA. This is Small ribosomal subunit protein uS19 from Legionella pneumophila (strain Paris).